The following is a 264-amino-acid chain: Thymidylate synthase (264 aa).

A dUMP-binding site is contributed by R21. H51 is a (6R)-5,10-methylene-5,6,7,8-tetrahydrofolate binding site. 126–127 (RR) contributes to the dUMP binding site. C146 functions as the Nucleophile in the catalytic mechanism. Residues 166-169 (RSAD), N177, and 207-209 (HLY) each bind dUMP. D169 lines the (6R)-5,10-methylene-5,6,7,8-tetrahydrofolate pocket. Residue A263 coordinates (6R)-5,10-methylene-5,6,7,8-tetrahydrofolate.

This sequence belongs to the thymidylate synthase family. Bacterial-type ThyA subfamily. As to quaternary structure, homodimer.

It is found in the cytoplasm. The catalysed reaction is dUMP + (6R)-5,10-methylene-5,6,7,8-tetrahydrofolate = 7,8-dihydrofolate + dTMP. It participates in pyrimidine metabolism; dTTP biosynthesis. Its function is as follows. Catalyzes the reductive methylation of 2'-deoxyuridine-5'-monophosphate (dUMP) to 2'-deoxythymidine-5'-monophosphate (dTMP) while utilizing 5,10-methylenetetrahydrofolate (mTHF) as the methyl donor and reductant in the reaction, yielding dihydrofolate (DHF) as a by-product. This enzymatic reaction provides an intracellular de novo source of dTMP, an essential precursor for DNA biosynthesis. In Dechloromonas aromatica (strain RCB), this protein is Thymidylate synthase.